Here is a 202-residue protein sequence, read N- to C-terminus: Histone chaperone ASF1B (202 aa).

The interval 1-156 (MAKVSVLNVA…TRFHINWDNN (156 aa)) is interaction with histone H3 and CHAF1B. S198 is subject to Phosphoserine; by TLK2.

It belongs to the ASF1 family. In terms of assembly, interacts with histone H3 (via C-terminus), including histone H3.1, H3.2 and H3.3, and histone H4; the interaction with H3 is direct. Interacts with the CHAF1A, CHAF1B and RBBP4 subunits of the CAF-1 complex. Interacts with HAT1, NASP and TAF1. Found in a soluble complex with NASP and histones H3 and H4; the interaction with NASP is probably indirect and mediated by H3-H4. Interacts with CDAN1. Found in a cytosolic complex with CDAN1, ASF1A, IPO4 and histones H3.1 and H4. Interacts with CREBBP. Phosphorylated by TLK2. Phosphorylated by TLK1. Highly expressed in germ cells. Restricted to premeiotic to meiotic stages during spermatogenesis.

It is found in the nucleus. The protein resides in the cytoplasm. Its subcellular location is the cytosol. Its function is as follows. Histone chaperone that facilitates histone deposition and histone exchange and removal during nucleosome assembly and disassembly. Cooperates with chromatin assembly factor 1 (CAF-1) to promote replication-dependent chromatin assembly. Also involved in the nuclear import of the histone H3-H4 dimer together with importin-4 (IPO4): specifically recognizes and binds newly synthesized histones with the monomethylation of H3 'Lys-9' (H3K9me1) and diacetylation at 'Lys-5' and 'Lys-12' of H4 (H4K5ac and H4K12ac) marks in the cytosol. Does not participate in replication-independent nucleosome deposition which is mediated by ASF1A and HIRA. Required for gonad development. The sequence is that of Histone chaperone ASF1B from Mus musculus (Mouse).